The sequence spans 155 residues: Protein-export protein SecB (155 aa).

Belongs to the SecB family. Homotetramer, a dimer of dimers. One homotetramer interacts with 1 SecA dimer.

It localises to the cytoplasm. One of the proteins required for the normal export of preproteins out of the cell cytoplasm. It is a molecular chaperone that binds to a subset of precursor proteins, maintaining them in a translocation-competent state. It also specifically binds to its receptor SecA. In Klebsiella pneumoniae subsp. pneumoniae (strain ATCC 700721 / MGH 78578), this protein is Protein-export protein SecB.